Reading from the N-terminus, the 88-residue chain is Small ribosomal subunit protein uS15 (88 aa).

A compositionally biased stretch (polar residues) spans 1–20; sequence MLTTQDKQNIIKENQQSEGD. Residues 1 to 24 are disordered; the sequence is MLTTQDKQNIIKENQQSEGDTGSP.

The protein belongs to the universal ribosomal protein uS15 family. Part of the 30S ribosomal subunit. Forms a bridge to the 50S subunit in the 70S ribosome, contacting the 23S rRNA.

One of the primary rRNA binding proteins, it binds directly to 16S rRNA where it helps nucleate assembly of the platform of the 30S subunit by binding and bridging several RNA helices of the 16S rRNA. Its function is as follows. Forms an intersubunit bridge (bridge B4) with the 23S rRNA of the 50S subunit in the ribosome. The protein is Small ribosomal subunit protein uS15 of Francisella philomiragia subsp. philomiragia (strain ATCC 25017 / CCUG 19701 / FSC 153 / O#319-036).